The chain runs to 333 residues: Ketol-acid reductoisomerase (NADP(+)) (333 aa).

In terms of domain architecture, KARI N-terminal Rossmann spans A2–T182. NADP(+) is bound by residues Y25 to Q28, K48, S51, S53, and D83 to Q86. Residue H108 is part of the active site. NADP(+) is bound at residue G134. The region spanning S183–L331 is the KARI C-terminal knotted domain. The Mg(2+) site is built by D191, E195, E227, and E231. S252 provides a ligand contact to substrate.

This sequence belongs to the ketol-acid reductoisomerase family. It depends on Mg(2+) as a cofactor.

The enzyme catalyses (2R)-2,3-dihydroxy-3-methylbutanoate + NADP(+) = (2S)-2-acetolactate + NADPH + H(+). It carries out the reaction (2R,3R)-2,3-dihydroxy-3-methylpentanoate + NADP(+) = (S)-2-ethyl-2-hydroxy-3-oxobutanoate + NADPH + H(+). The protein operates within amino-acid biosynthesis; L-isoleucine biosynthesis; L-isoleucine from 2-oxobutanoate: step 2/4. Its pathway is amino-acid biosynthesis; L-valine biosynthesis; L-valine from pyruvate: step 2/4. In terms of biological role, involved in the biosynthesis of branched-chain amino acids (BCAA). Catalyzes an alkyl-migration followed by a ketol-acid reduction of (S)-2-acetolactate (S2AL) to yield (R)-2,3-dihydroxy-isovalerate. In the isomerase reaction, S2AL is rearranged via a Mg-dependent methyl migration to produce 3-hydroxy-3-methyl-2-ketobutyrate (HMKB). In the reductase reaction, this 2-ketoacid undergoes a metal-dependent reduction by NADPH to yield (R)-2,3-dihydroxy-isovalerate. This chain is Ketol-acid reductoisomerase (NADP(+)), found in Leptospira interrogans serogroup Icterohaemorrhagiae serovar copenhageni (strain Fiocruz L1-130).